Consider the following 256-residue polypeptide: Imidazole glycerol phosphate synthase subunit HisF (256 aa).

Active-site residues include Asp-12 and Asp-131.

It belongs to the HisA/HisF family. In terms of assembly, heterodimer of HisH and HisF.

It is found in the cytoplasm. The enzyme catalyses 5-[(5-phospho-1-deoxy-D-ribulos-1-ylimino)methylamino]-1-(5-phospho-beta-D-ribosyl)imidazole-4-carboxamide + L-glutamine = D-erythro-1-(imidazol-4-yl)glycerol 3-phosphate + 5-amino-1-(5-phospho-beta-D-ribosyl)imidazole-4-carboxamide + L-glutamate + H(+). It participates in amino-acid biosynthesis; L-histidine biosynthesis; L-histidine from 5-phospho-alpha-D-ribose 1-diphosphate: step 5/9. Its function is as follows. IGPS catalyzes the conversion of PRFAR and glutamine to IGP, AICAR and glutamate. The HisF subunit catalyzes the cyclization activity that produces IGP and AICAR from PRFAR using the ammonia provided by the HisH subunit. This Ectopseudomonas mendocina (strain ymp) (Pseudomonas mendocina) protein is Imidazole glycerol phosphate synthase subunit HisF.